The following is a 213-amino-acid chain: Imidazole glycerol phosphate synthase subunit HisH (213 aa).

A Glutamine amidotransferase type-1 domain is found at Ser-4–Pro-213. Catalysis depends on Cys-83, which acts as the Nucleophile. Residues His-193 and Glu-195 contribute to the active site.

As to quaternary structure, heterodimer of HisH and HisF.

It is found in the cytoplasm. The catalysed reaction is 5-[(5-phospho-1-deoxy-D-ribulos-1-ylimino)methylamino]-1-(5-phospho-beta-D-ribosyl)imidazole-4-carboxamide + L-glutamine = D-erythro-1-(imidazol-4-yl)glycerol 3-phosphate + 5-amino-1-(5-phospho-beta-D-ribosyl)imidazole-4-carboxamide + L-glutamate + H(+). It carries out the reaction L-glutamine + H2O = L-glutamate + NH4(+). Its pathway is amino-acid biosynthesis; L-histidine biosynthesis; L-histidine from 5-phospho-alpha-D-ribose 1-diphosphate: step 5/9. Functionally, IGPS catalyzes the conversion of PRFAR and glutamine to IGP, AICAR and glutamate. The HisH subunit catalyzes the hydrolysis of glutamine to glutamate and ammonia as part of the synthesis of IGP and AICAR. The resulting ammonia molecule is channeled to the active site of HisF. This is Imidazole glycerol phosphate synthase subunit HisH from Burkholderia multivorans (strain ATCC 17616 / 249).